We begin with the raw amino-acid sequence, 112 residues long: Prostatic steroid-binding protein C2 (112 aa).

An N-terminal signal peptide occupies residues 1–20; the sequence is MRLSLCLLTILVVCCYEANG. Q21 carries the post-translational modification Pyrrolidone carboxylic acid.

This sequence belongs to the secretoglobin family. Lipophilin subfamily. In terms of assembly, prostatein is composed of three different peptides called C1, C2 and C3. These form covalent C1:C3 (F) and C2:C3 (S) heterodimers whose noncovalent association forms tetrameric (C1:C3/C3:C2) prostatein molecules. In terms of processing, linked by three disulfide bonds to C3. Post-translationally, the N-terminus is blocked.

It is found in the secreted. Its function is as follows. Part of prostatein which is the major secretory glycoprotein of ventral prostate gland. The polypeptide is Prostatic steroid-binding protein C2 (Psbpc2) (Rattus norvegicus (Rat)).